The chain runs to 286 residues: 4-hydroxybenzoate octaprenyltransferase (286 aa).

8 helical membrane-spanning segments follow: residues 20–40 (IGTL…AGGM), 43–63 (LKVL…GCII), 96–116 (LFVI…GLVV), 142–162 (FLGV…TGEV), 167–187 (WWLF…YAMV), 210–230 (QIIG…GWSA), 235–255 (VYGL…MLIF), and 266–286 (FLNN…DYLF).

This sequence belongs to the UbiA prenyltransferase family. The cofactor is Mg(2+).

The protein resides in the cell inner membrane. The catalysed reaction is all-trans-octaprenyl diphosphate + 4-hydroxybenzoate = 4-hydroxy-3-(all-trans-octaprenyl)benzoate + diphosphate. The protein operates within cofactor biosynthesis; ubiquinone biosynthesis. Its function is as follows. Catalyzes the prenylation of para-hydroxybenzoate (PHB) with an all-trans polyprenyl group. Mediates the second step in the final reaction sequence of ubiquinone-8 (UQ-8) biosynthesis, which is the condensation of the polyisoprenoid side chain with PHB, generating the first membrane-bound Q intermediate 3-octaprenyl-4-hydroxybenzoate. This chain is 4-hydroxybenzoate octaprenyltransferase, found in Shewanella oneidensis (strain ATCC 700550 / JCM 31522 / CIP 106686 / LMG 19005 / NCIMB 14063 / MR-1).